The sequence spans 214 residues: MNLILLGPPGAGKGTQAKLLIKKYRIPQISTGDILRAAVKDMTPMGGKAKSFMDAGALVPDEVVVGIIQERLNLADCSNGFILDGFPRTVAQADALAKVLSGLGRSIDHVISIVVDNEELLERVTGRRTCRNCGKGFHVSFDPPKSSGICDECSGELYQRDDDREDTMRKRLEVYWQQTSPLVEYYKNKSLLRSVEGVGSMEEIQQKIVSILQG.

Gly10–Thr15 lines the ATP pocket. The segment at Ser30–Val59 is NMP. Residues Thr31, Arg36, Ala57–Val59, Gly85–Arg88, and Gln92 contribute to the AMP site. Positions Gly126–Asp163 are LID. Arg127 lines the ATP pocket. Zn(2+) contacts are provided by Cys130, Cys133, Cys150, and Cys153. Arg160 and Arg171 together coordinate AMP. Gly199 is an ATP binding site.

This sequence belongs to the adenylate kinase family. In terms of assembly, monomer.

It is found in the cytoplasm. It catalyses the reaction AMP + ATP = 2 ADP. Its pathway is purine metabolism; AMP biosynthesis via salvage pathway; AMP from ADP: step 1/1. Catalyzes the reversible transfer of the terminal phosphate group between ATP and AMP. Plays an important role in cellular energy homeostasis and in adenine nucleotide metabolism. In Geotalea daltonii (strain DSM 22248 / JCM 15807 / FRC-32) (Geobacter daltonii), this protein is Adenylate kinase.